The primary structure comprises 166 residues: Large ribosomal subunit protein uL11x (166 aa).

Belongs to the universal ribosomal protein uL11 family.

Binds directly to 26S ribosomal RNA. The protein is Large ribosomal subunit protein uL11x (RPL12C) of Arabidopsis thaliana (Mouse-ear cress).